The chain runs to 843 residues: Elongation factor 2 (843 aa).

The region spanning 17-344 (HNIRNMSVIA…MMIFHLPSPH (328 aa)) is the tr-type G domain. GTP contacts are provided by residues 26–33 (AHVDHGKS) and 158–161 (NKMD). H700 bears the Diphthamide mark. The residue at position 837 (S837) is a Phosphoserine.

The protein belongs to the TRAFAC class translation factor GTPase superfamily. Classic translation factor GTPase family. May interact with glutaredoxins (Grxs). As to expression, expressed in root, stem, leaves, flowers and siliques.

The protein localises to the cytoplasm. The catalysed reaction is GTP + H2O = GDP + phosphate + H(+). Its pathway is protein biosynthesis; polypeptide chain elongation. Functionally, catalyzes the GTP-dependent ribosomal translocation step during translation elongation. During this step, the ribosome changes from the pre-translocational (PRE) to the post-translocational (POST) state as the newly formed A-site-bound peptidyl-tRNA and P-site-bound deacylated tRNA move to the P and E sites, respectively. Catalyzes the coordinated movement of the two tRNA molecules, the mRNA and conformational changes in the ribosome. Involved in cold responses leading to freezing tolerance via the induction of cold-responsive genes. This chain is Elongation factor 2, found in Arabidopsis thaliana (Mouse-ear cress).